A 729-amino-acid polypeptide reads, in one-letter code: Fatty acid oxidation complex subunit alpha (729 aa).

The segment at 1–189 is enoyl-CoA hydratase/isomerase; the sequence is MLYKGDTLYL…KIGLVDGVVK (189 aa). Aspartate 296 is a binding site for substrate. Residues 311–729 are 3-hydroxyacyl-CoA dehydrogenase; it reads ETPKQAAVLG…ARPVGDLKTA (419 aa). Residues methionine 324, aspartate 343, 400-402, lysine 407, and serine 429 each bind NAD(+); that span reads VVE. Residue histidine 450 is the For 3-hydroxyacyl-CoA dehydrogenase activity of the active site. Asparagine 453 is a binding site for NAD(+). Substrate-binding residues include asparagine 500 and tyrosine 660. The disordered stretch occupies residues 708–729; that stretch reads RHNEPYYPPVEPARPVGDLKTA.

In the N-terminal section; belongs to the enoyl-CoA hydratase/isomerase family. It in the C-terminal section; belongs to the 3-hydroxyacyl-CoA dehydrogenase family. As to quaternary structure, heterotetramer of two alpha chains (FadB) and two beta chains (FadA).

The catalysed reaction is a (3S)-3-hydroxyacyl-CoA + NAD(+) = a 3-oxoacyl-CoA + NADH + H(+). The enzyme catalyses a (3S)-3-hydroxyacyl-CoA = a (2E)-enoyl-CoA + H2O. It catalyses the reaction a 4-saturated-(3S)-3-hydroxyacyl-CoA = a (3E)-enoyl-CoA + H2O. It carries out the reaction (3S)-3-hydroxybutanoyl-CoA = (3R)-3-hydroxybutanoyl-CoA. The catalysed reaction is a (3Z)-enoyl-CoA = a 4-saturated (2E)-enoyl-CoA. The enzyme catalyses a (3E)-enoyl-CoA = a 4-saturated (2E)-enoyl-CoA. The protein operates within lipid metabolism; fatty acid beta-oxidation. In terms of biological role, involved in the aerobic and anaerobic degradation of long-chain fatty acids via beta-oxidation cycle. Catalyzes the formation of 3-oxoacyl-CoA from enoyl-CoA via L-3-hydroxyacyl-CoA. It can also use D-3-hydroxyacyl-CoA and cis-3-enoyl-CoA as substrate. The polypeptide is Fatty acid oxidation complex subunit alpha (Escherichia coli O7:K1 (strain IAI39 / ExPEC)).